The primary structure comprises 88 residues: uncharacterized protein (88 aa).

This is an uncharacterized protein from Thermoproteus tenax virus 1 (strain KRA1) (TTV1).